Here is a 122-residue protein sequence, read N- to C-terminus: Large ribosomal subunit protein uL14 (122 aa).

This sequence belongs to the universal ribosomal protein uL14 family. As to quaternary structure, part of the 50S ribosomal subunit. Forms a cluster with proteins L3 and L19. In the 70S ribosome, L14 and L19 interact and together make contacts with the 16S rRNA in bridges B5 and B8.

Functionally, binds to 23S rRNA. Forms part of two intersubunit bridges in the 70S ribosome. The sequence is that of Large ribosomal subunit protein uL14 from Streptomyces griseus subsp. griseus (strain JCM 4626 / CBS 651.72 / NBRC 13350 / KCC S-0626 / ISP 5235).